Here is a 178-residue protein sequence, read N- to C-terminus: Large ribosomal subunit protein uL16 (178 aa).

Belongs to the universal ribosomal protein uL16 family.

This Saccharolobus islandicus (strain Y.N.15.51 / Yellowstone #2) (Sulfolobus islandicus) protein is Large ribosomal subunit protein uL16.